An 80-amino-acid polypeptide reads, in one-letter code: MMKLVLFSIIVILFSLIGSIHGADVPGNYPLDSSGNKYPCTVLGDNQSCIDVCKKHGVKYGYCYSFKCWCEFLEDKNVSI.

The N-terminal stretch at 1–22 is a signal peptide; it reads MMKLVLFSIIVILFSLIGSIHG. The 56-residue stretch at 25–80 folds into the LCN-type CS-alpha/beta domain; sequence VPGNYPLDSSGNKYPCTVLGDNQSCIDVCKKHGVKYGYCYSFKCWCEFLEDKNVSI. Disulfide bonds link C40–C63, C49–C68, and C53–C70.

As to expression, expressed by the venom gland.

It is found in the secreted. Its function is as follows. Probable neurotoxin that inhibits ion channels. Is toxic to mice. Is about 2.8% of the total protein in the venom. The chain is Toxin Acra1 from Androctonus crassicauda (Arabian fat-tailed scorpion).